Consider the following 400-residue polypeptide: Phosphoglycerate kinase (400 aa).

Substrate contacts are provided by residues 23–25 (DLN), Arg38, 61–64 (HFGR), Arg120, and Arg153. ATP is bound by residues Lys203, Glu325, and 355–358 (GGDT).

The protein belongs to the phosphoglycerate kinase family. As to quaternary structure, monomer.

The protein resides in the cytoplasm. The enzyme catalyses (2R)-3-phosphoglycerate + ATP = (2R)-3-phospho-glyceroyl phosphate + ADP. Its pathway is carbohydrate degradation; glycolysis; pyruvate from D-glyceraldehyde 3-phosphate: step 2/5. The chain is Phosphoglycerate kinase from Methylobacterium radiotolerans (strain ATCC 27329 / DSM 1819 / JCM 2831 / NBRC 15690 / NCIMB 10815 / 0-1).